Here is a 262-residue protein sequence, read N- to C-terminus: Putative 1-acyl-sn-glycerol-3-phosphate acyltransferase acl-1 (262 aa).

3 helical membrane passes run 3–23 (FLAI…PVIG), 29–49 (VYFG…SIPF), and 89–109 (IIIA…AWPV). Positions 94 to 99 (HQSALD) match the HXXXXD motif motif.

The protein belongs to the 1-acyl-sn-glycerol-3-phosphate acyltransferase family.

It localises to the membrane. It carries out the reaction a 1-acyl-sn-glycero-3-phosphate + an acyl-CoA = a 1,2-diacyl-sn-glycero-3-phosphate + CoA. It functions in the pathway phospholipid metabolism; CDP-diacylglycerol biosynthesis; CDP-diacylglycerol from sn-glycerol 3-phosphate: step 2/3. Functionally, converts lysophosphatidic acid (LPA) into phosphatidic acid by incorporating an acyl moiety at the sn-2 position of the glycerol backbone. This chain is Putative 1-acyl-sn-glycerol-3-phosphate acyltransferase acl-1 (acl-1), found in Caenorhabditis elegans.